A 329-amino-acid chain; its full sequence is Oligopeptide transport ATP-binding protein AppF (329 aa).

The ABC transporter domain occupies 10-261; the sequence is LELRDVKKYF…PLHPYTQALL (252 aa). An ATP-binding site is contributed by 53-60; that stretch reads GESGCGKS.

It belongs to the ABC transporter superfamily.

It localises to the cell membrane. This protein is a component of an oligopeptide permease, a binding protein-dependent transport system. This APP system can completely substitute for the OPP system in both sporulation and genetic competence, though, unlike OPP, is incapable of transporting tripeptides. Probably responsible for energy coupling to the transport system. This is Oligopeptide transport ATP-binding protein AppF (appF) from Bacillus subtilis (strain 168).